A 68-amino-acid polypeptide reads, in one-letter code: EDRPKFCYLPDDPGVCKAHIPRFYYNPASNKCKEFIYGGCGGNANNFETRAECRHTCVASRKGGPRRP.

Glu1 carries the pyrrolidone carboxylic acid (Glu) modification. The BPTI/Kunitz inhibitor domain maps to 7-57 (CYLPDDPGVCKAHIPRFYYNPASNKCKEFIYGGCGGNANNFETRAECRHTC). 3 cysteine pairs are disulfide-bonded: Cys7–Cys57, Cys16–Cys40, and Cys32–Cys53.

Expressed by the venom gland.

The protein localises to the secreted. In terms of biological role, serine protease inhibitor that weakly inhibits trypsin (Ki=0.2 uM). May have potassium channel blocking activities. This chain is Kunitz-type serine protease inhibitor PPTI, found in Pseudocerastes persicus (Persian horned viper).